Reading from the N-terminus, the 446-residue chain is Chromosomal replication initiator protein DnaA (446 aa).

Positions M1–P92 are domain I, interacts with DnaA modulators. The domain II stretch occupies residues P93 to S109. Residues M110 to S326 form a domain III, AAA+ region region. ATP is bound by residues G154, G156, K157, and T158. The interval S327 to K446 is domain IV, binds dsDNA.

The protein belongs to the DnaA family. Oligomerizes as a right-handed, spiral filament on DNA at oriC.

It localises to the cytoplasm. Plays an essential role in the initiation and regulation of chromosomal replication. ATP-DnaA binds to the origin of replication (oriC) to initiate formation of the DNA replication initiation complex once per cell cycle. Binds the DnaA box (a 9 base pair repeat at the origin) and separates the double-stranded (ds)DNA. Forms a right-handed helical filament on oriC DNA; dsDNA binds to the exterior of the filament while single-stranded (ss)DNA is stabiized in the filament's interior. The ATP-DnaA-oriC complex binds and stabilizes one strand of the AT-rich DNA unwinding element (DUE), permitting loading of DNA polymerase. After initiation quickly degrades to an ADP-DnaA complex that is not apt for DNA replication. Binds acidic phospholipids. This chain is Chromosomal replication initiator protein DnaA, found in Bacillus anthracis (strain A0248).